We begin with the raw amino-acid sequence, 355 residues long: 3-isopropylmalate dehydrogenase (355 aa).

Arg98, Arg108, Arg132, and Asp223 together coordinate substrate. 3 residues coordinate Mg(2+): Asp223, Asp247, and Asp251. 283-295 (GSAPDIAGQQKAD) serves as a coordination point for NAD(+).

It belongs to the isocitrate and isopropylmalate dehydrogenases family. LeuB type 2 subfamily. Homodimer. It depends on Mg(2+) as a cofactor. Mn(2+) serves as cofactor.

It localises to the cytoplasm. It carries out the reaction (2R,3S)-3-isopropylmalate + NAD(+) = 4-methyl-2-oxopentanoate + CO2 + NADH. The protein operates within amino-acid biosynthesis; L-leucine biosynthesis; L-leucine from 3-methyl-2-oxobutanoate: step 3/4. Its function is as follows. Catalyzes the oxidation of 3-carboxy-2-hydroxy-4-methylpentanoate (3-isopropylmalate) to 3-carboxy-4-methyl-2-oxopentanoate. The product decarboxylates to 4-methyl-2 oxopentanoate. This Clavibacter michiganensis subsp. michiganensis (strain NCPPB 382) protein is 3-isopropylmalate dehydrogenase.